Reading from the N-terminus, the 532-residue chain is 2,3-bisphosphoglycerate-independent phosphoglycerate mutase (532 aa).

Asp15 and Ser65 together coordinate Mn(2+). The active-site Phosphoserine intermediate is Ser65. Substrate is bound by residues His126, 156 to 157, Arg188, Arg194, 258 to 261, and Lys331; these read RD and RPDR. Mn(2+) is bound by residues Asp398, His402, Asp439, His440, and His457.

The protein belongs to the BPG-independent phosphoglycerate mutase family. Monomer. It depends on Mn(2+) as a cofactor.

It carries out the reaction (2R)-2-phosphoglycerate = (2R)-3-phosphoglycerate. It participates in carbohydrate degradation; glycolysis; pyruvate from D-glyceraldehyde 3-phosphate: step 3/5. In terms of biological role, catalyzes the interconversion of 2-phosphoglycerate and 3-phosphoglycerate. The polypeptide is 2,3-bisphosphoglycerate-independent phosphoglycerate mutase (Trichodesmium erythraeum (strain IMS101)).